The chain runs to 147 residues: uncharacterized protein (147 aa).

The next 4 membrane-spanning stretches (helical) occupy residues 13–33 (LSLV…IIGL), 45–65 (LFVG…AYFL), 80–100 (YLFT…LILI), and 116–136 (WGFF…IIPY).

The protein localises to the cell membrane. This is an uncharacterized protein from Methanocaldococcus jannaschii (strain ATCC 43067 / DSM 2661 / JAL-1 / JCM 10045 / NBRC 100440) (Methanococcus jannaschii).